An 835-amino-acid chain; its full sequence is uncharacterized protein (835 aa).

This is an uncharacterized protein from Mycoplasma genitalium (strain ATCC 33530 / DSM 19775 / NCTC 10195 / G37) (Mycoplasmoides genitalium).